The primary structure comprises 50 residues: Light-harvesting protein B-870 beta chain (50 aa).

Residues 2–22 are Cytoplasmic-facing; sequence ADNTDLSFTGLTDEQAQELHS. Positions 21 and 39 each coordinate a bacteriochlorophyll. Residues 23–45 traverse the membrane as a helical segment; the sequence is VYMSGLFLFAAVAVVAHLATYIW. Over 46–50 the chain is Periplasmic; sequence RPWFG.

This sequence belongs to the antenna complex beta subunit family. In terms of assembly, the core complex is formed by different alpha and beta chains, binding bacteriochlorophyll molecules, and arranged most probably in tetrameric structures disposed around the reaction center. The non-pigmented gamma chains may constitute additional components.

Its subcellular location is the cell inner membrane. In terms of biological role, antenna complexes are light-harvesting systems, which transfer the excitation energy to the reaction centers. In Roseobacter denitrificans (strain ATCC 33942 / OCh 114) (Erythrobacter sp. (strain OCh 114)), this protein is Light-harvesting protein B-870 beta chain (pufB).